The primary structure comprises 138 residues: Putative pre-16S rRNA nuclease (138 aa).

This sequence belongs to the YqgF nuclease family.

Its subcellular location is the cytoplasm. In terms of biological role, could be a nuclease involved in processing of the 5'-end of pre-16S rRNA. This chain is Putative pre-16S rRNA nuclease, found in Carboxydothermus hydrogenoformans (strain ATCC BAA-161 / DSM 6008 / Z-2901).